The following is a 172-amino-acid chain: Adenine phosphoribosyltransferase (172 aa).

Belongs to the purine/pyrimidine phosphoribosyltransferase family. In terms of assembly, homodimer.

It localises to the cytoplasm. It carries out the reaction AMP + diphosphate = 5-phospho-alpha-D-ribose 1-diphosphate + adenine. It participates in purine metabolism; AMP biosynthesis via salvage pathway; AMP from adenine: step 1/1. In terms of biological role, catalyzes a salvage reaction resulting in the formation of AMP, that is energically less costly than de novo synthesis. This Staphylococcus epidermidis (strain ATCC 35984 / DSM 28319 / BCRC 17069 / CCUG 31568 / BM 3577 / RP62A) protein is Adenine phosphoribosyltransferase.